Here is a 502-residue protein sequence, read N- to C-terminus: ATP synthase subunit alpha (502 aa).

ATP is bound at residue 169 to 176 (GDRQTGKT).

Belongs to the ATPase alpha/beta chains family. As to quaternary structure, F-type ATPases have 2 components, CF(1) - the catalytic core - and CF(0) - the membrane proton channel. CF(1) has five subunits: alpha(3), beta(3), gamma(1), delta(1), epsilon(1). CF(0) has three main subunits: a(1), b(2) and c(9-12). The alpha and beta chains form an alternating ring which encloses part of the gamma chain. CF(1) is attached to CF(0) by a central stalk formed by the gamma and epsilon chains, while a peripheral stalk is formed by the delta and b chains.

The protein resides in the cell membrane. The catalysed reaction is ATP + H2O + 4 H(+)(in) = ADP + phosphate + 5 H(+)(out). In terms of biological role, produces ATP from ADP in the presence of a proton gradient across the membrane. The alpha chain is a regulatory subunit. The chain is ATP synthase subunit alpha from Bacillus sp. (strain PS3).